The primary structure comprises 25 residues: Caerin-1.18 (25 aa).

Leucine amide is present on L25.

In terms of tissue distribution, expressed by the skin dorsal glands.

The protein localises to the secreted. Shows significant activity against Gram-positive organisms, but is less effective against Gram-negative organisms. The sequence is that of Caerin-1.18 from Ranoidea gracilenta (Dainty green tree frog).